Reading from the N-terminus, the 248-residue chain is tRNA (guanine-N(1)-)-methyltransferase (248 aa).

S-adenosyl-L-methionine is bound by residues G113 and 133–138 (IGDYVL).

Belongs to the RNA methyltransferase TrmD family. In terms of assembly, homodimer.

It is found in the cytoplasm. It carries out the reaction guanosine(37) in tRNA + S-adenosyl-L-methionine = N(1)-methylguanosine(37) in tRNA + S-adenosyl-L-homocysteine + H(+). Its function is as follows. Specifically methylates guanosine-37 in various tRNAs. The protein is tRNA (guanine-N(1)-)-methyltransferase of Shewanella piezotolerans (strain WP3 / JCM 13877).